We begin with the raw amino-acid sequence, 699 residues long: Elongation factor G (699 aa).

The 281-residue stretch at 8 to 288 (EDYRNFGIMA…AVVDYLPSPI (281 aa)) folds into the tr-type G domain. Residues 17 to 24 (AHIDAGKT), 86 to 90 (DTPGH), and 140 to 143 (NKMD) contribute to the GTP site.

This sequence belongs to the TRAFAC class translation factor GTPase superfamily. Classic translation factor GTPase family. EF-G/EF-2 subfamily.

The protein localises to the cytoplasm. In terms of biological role, catalyzes the GTP-dependent ribosomal translocation step during translation elongation. During this step, the ribosome changes from the pre-translocational (PRE) to the post-translocational (POST) state as the newly formed A-site-bound peptidyl-tRNA and P-site-bound deacylated tRNA move to the P and E sites, respectively. Catalyzes the coordinated movement of the two tRNA molecules, the mRNA and conformational changes in the ribosome. In Sinorhizobium fredii (strain NBRC 101917 / NGR234), this protein is Elongation factor G.